Here is a 143-residue protein sequence, read N- to C-terminus: Peptide methionine sulfoxide reductase MsrB (143 aa).

Positions 16–139 (DAELRRRLTP…NSAALNFESR (124 aa)) constitute a MsrB domain. Residues Cys55, Cys58, Cys104, and Cys107 each coordinate Zn(2+). Catalysis depends on Cys128, which acts as the Nucleophile.

It belongs to the MsrB Met sulfoxide reductase family. It depends on Zn(2+) as a cofactor.

The catalysed reaction is L-methionyl-[protein] + [thioredoxin]-disulfide + H2O = L-methionyl-(R)-S-oxide-[protein] + [thioredoxin]-dithiol. This chain is Peptide methionine sulfoxide reductase MsrB, found in Burkholderia lata (strain ATCC 17760 / DSM 23089 / LMG 22485 / NCIMB 9086 / R18194 / 383).